A 158-amino-acid chain; its full sequence is Succinate dehydrogenase [ubiquinone] cytochrome b small subunit B, mitochondrial (158 aa).

The N-terminal 29 residues, 1-29 (MAALVRISSLCHRGVSPLLFRPSSLIRPL), are a transit peptide targeting the mitochondrion. The Mitochondrial matrix portion of the chain corresponds to 30–62 (AVQQKDHDCSYLISARIHATPSNYAGSGSKAAT). Residues 63–84 (MHWTGERILSIALLSLAPVAYF) form a helical membrane-spanning segment. Residues 85 to 89 (CPSPA) lie on the Mitochondrial intermembrane side of the membrane. The helical transmembrane segment at 90–110 (VDYSLAAALTLHGHWGLGQVV) threads the bilayer. Residue His-101 participates in heme b binding. Residues 111–119 (TDYVHGDAK) are Mitochondrial matrix-facing. Tyr-113 is a binding site for a ubiquinone. A helical transmembrane segment spans residues 120–141 (IKMANAGLFVLSTVTFAGLCYF). Topologically, residues 142–158 (NYHDVGICKAVALLWSK) are mitochondrial intermembrane.

It belongs to the CybS family. In terms of assembly, component of complex II composed of four subunits: the flavoprotein (FP) SDHA, iron-sulfur protein (IP) SDHB, and a cytochrome b560 composed of SDHC and SDHD.

It localises to the mitochondrion inner membrane. It participates in carbohydrate metabolism; tricarboxylic acid cycle. In terms of biological role, membrane-anchoring subunit of succinate dehydrogenase (SDH) that is involved in complex II of the mitochondrial electron transport chain and is responsible for transferring electrons from succinate to ubiquinone (coenzyme Q). SDH also oxidizes malate to the non-canonical enol form of oxaloacetate, enol-oxaloacetate. Enol-oxaloacetate, which is a potent inhibitor of the succinate dehydrogenase activity, is further isomerized into keto-oxaloacetate. The chain is Succinate dehydrogenase [ubiquinone] cytochrome b small subunit B, mitochondrial (sdhdb) from Danio rerio (Zebrafish).